The primary structure comprises 156 residues: Small ribosomal subunit protein uS7 (156 aa).

This sequence belongs to the universal ribosomal protein uS7 family. In terms of assembly, part of the 30S ribosomal subunit. Contacts proteins S9 and S11.

One of the primary rRNA binding proteins, it binds directly to 16S rRNA where it nucleates assembly of the head domain of the 30S subunit. Is located at the subunit interface close to the decoding center, probably blocks exit of the E-site tRNA. The sequence is that of Small ribosomal subunit protein uS7 from Oleidesulfovibrio alaskensis (strain ATCC BAA-1058 / DSM 17464 / G20) (Desulfovibrio alaskensis).